The chain runs to 255 residues: ATP synthase subunit b 1 (255 aa).

Residues 5–22 (WITVAAQIVNFLLLIWLL) traverse the membrane as a helical segment.

It belongs to the ATPase B chain family. As to quaternary structure, F-type ATPases have 2 components, F(1) - the catalytic core - and F(0) - the membrane proton channel. F(1) has five subunits: alpha(3), beta(3), gamma(1), delta(1), epsilon(1). F(0) has three main subunits: a(1), b(2) and c(10-14). The alpha and beta chains form an alternating ring which encloses part of the gamma chain. F(1) is attached to F(0) by a central stalk formed by the gamma and epsilon chains, while a peripheral stalk is formed by the delta and b chains.

The protein localises to the cell inner membrane. Functionally, f(1)F(0) ATP synthase produces ATP from ADP in the presence of a proton or sodium gradient. F-type ATPases consist of two structural domains, F(1) containing the extramembraneous catalytic core and F(0) containing the membrane proton channel, linked together by a central stalk and a peripheral stalk. During catalysis, ATP synthesis in the catalytic domain of F(1) is coupled via a rotary mechanism of the central stalk subunits to proton translocation. In terms of biological role, component of the F(0) channel, it forms part of the peripheral stalk, linking F(1) to F(0). In Dinoroseobacter shibae (strain DSM 16493 / NCIMB 14021 / DFL 12), this protein is ATP synthase subunit b 1.